The primary structure comprises 220 residues: RING-H2 finger protein ATL77 (220 aa).

Residues 53 to 73 (LMLLSILLCGIICSLGLHYII) traverse the membrane as a helical segment. Residues 130–172 (CVICLSDFVAGEQLRVLPKCNHGFHLRCIDKWLTQHMTCPKCR) form an RING-type; atypical zinc finger.

It belongs to the RING-type zinc finger family. ATL subfamily.

The protein resides in the membrane. The enzyme catalyses S-ubiquitinyl-[E2 ubiquitin-conjugating enzyme]-L-cysteine + [acceptor protein]-L-lysine = [E2 ubiquitin-conjugating enzyme]-L-cysteine + N(6)-ubiquitinyl-[acceptor protein]-L-lysine.. The protein operates within protein modification; protein ubiquitination. The polypeptide is RING-H2 finger protein ATL77 (ATL77) (Arabidopsis thaliana (Mouse-ear cress)).